Consider the following 522-residue polypeptide: DEAD-box ATP-dependent RNA helicase 1 (522 aa).

A Q motif motif is present at residues 30 to 59 (CALDTLPCLNPKLKKALENMGISSLFPVQV). A Helicase ATP-binding domain is found at 66-297 (IGPGGFERDI…QLDLHHPLFM (232 aa)). 79–86 (SPTGSGKT) serves as a coordination point for ATP. The short motif at 207-210 (DETD) is the DEAD box element. The Helicase C-terminal domain maps to 325-475 (YLVALLKSWE…PIPPTSLDSI (151 aa)). Residues 490 to 522 (VESEAPKKGRQAFRHNSRTGNSQTKLNKPRSEA) form a disordered region. The segment covering 497 to 506 (KGRQAFRHNS) has biased composition (basic residues).

It belongs to the DEAD box helicase family. DDX51/DBP6 subfamily.

It carries out the reaction ATP + H2O = ADP + phosphate + H(+). This is DEAD-box ATP-dependent RNA helicase 1 (RH1) from Arabidopsis thaliana (Mouse-ear cress).